Here is a 94-residue protein sequence, read N- to C-terminus: Defensin-7 (94 aa).

An N-terminal signal peptide occupies residues 1–19 (MRTLTLLSAFLLVALQAWA). Disulfide bonds link Cys65–Cys93 and Cys72–Cys92.

This sequence belongs to the alpha-defensin family.

It localises to the secreted. Functionally, has antimicrobial activity. The polypeptide is Defensin-7 (DEFA7) (Pan troglodytes (Chimpanzee)).